The following is a 266-amino-acid chain: Calpain small subunit 1 (266 aa).

N-acetylmethionine is present on Met1. Ser6 bears the Phosphoserine mark. Residues 94 to 128 (EEVRQFRRLFAQLAGDDMEVSATELMNILNKVVTR) enclose the EF-hand 1; atypical domain. Ca(2+) is bound by residues Ala107, Asp110, Glu112, Glu117, Asp135, Asp150, Asp152, Thr154, Lys156, and Glu161. EF-hand domains are found at residues 137–170 (FGLD…NNIK), 167–202 (NNIK…AGFH), 203–231 (LNEH…ISCL), and 232–266 (VRLD…TMYS). Residue Lys177 is modified to N6-acetyllysine. Ca(2+) is bound by residues Asp180, Asp182, Ser184, Thr186, Glu191, and Asp223.

In terms of assembly, homodimer or heterodimer of a large (catalytic) and a small (regulatory) subunit. In presence of calcium, the heterodimer dissociates. Post-translationally, the N-terminus is blocked.

Its subcellular location is the cytoplasm. It localises to the cell membrane. In terms of biological role, regulatory subunit of the calcium-regulated non-lysosomal thiol-protease which catalyzes limited proteolysis of substrates involved in cytoskeletal remodeling and signal transduction. Essential for embryonic development. This chain is Calpain small subunit 1 (CAPNS1), found in Oryctolagus cuniculus (Rabbit).